The primary structure comprises 260 residues: Deoxycytidine kinase (260 aa).

Residues Ser-11 and Ser-15 each carry the phosphoserine; by CK1 modification. An ATP-binding site is contributed by 28–36; sequence GNIAAGKST. Residue Glu-53 coordinates substrate. Residue Thr-72 is modified to Phosphothreonine; by CK1. Residue Ser-74 is modified to Phosphoserine; by CK1. Residues Tyr-86 and Gln-97 each coordinate substrate. Glu-127 (proton acceptor) is an active-site residue. Substrate contacts are provided by Arg-128 and Asp-133. 188 to 192 is an ATP binding site; the sequence is RIYIR. Substrate is bound at residue Glu-197. 240–242 is an ATP binding site; the sequence is LDF.

Belongs to the DCK/DGK family. In terms of assembly, homodimer. Phosphorylated and activated in vitro upon phosphorylation at Ser-74 by CSNK1D/CK1.

It is found in the nucleus. The catalysed reaction is 2'-deoxycytidine + a ribonucleoside 5'-triphosphate = dCMP + a ribonucleoside 5'-diphosphate + H(+). It carries out the reaction 2'-deoxyadenosine + ATP = dAMP + ADP + H(+). The enzyme catalyses 2'-deoxyguanosine + ATP = dGMP + ADP + H(+). Functionally, phosphorylates the deoxyribonucleosides deoxycytidine, deoxyguanosine and deoxyadenosine. The chain is Deoxycytidine kinase (Dck) from Rattus norvegicus (Rat).